A 449-amino-acid chain; its full sequence is tRNA-2-methylthio-N(6)-dimethylallyladenosine synthase (449 aa).

The 122-residue stretch at 3-124 (KMLYIKTYGC…LPTMLEKLDS (122 aa)) folds into the MTTase N-terminal domain. The [4Fe-4S] cluster site is built by Cys-12, Cys-48, Cys-87, Cys-163, Cys-167, and Cys-170. A Radical SAM core domain is found at 149 to 380 (KSPTVSGLVS…QAQLMLQQLE (232 aa)). A TRAM domain is found at 383–447 (QKLIGKVVPV…ASSLFGEVCP (65 aa)).

This sequence belongs to the methylthiotransferase family. MiaB subfamily. Monomer. [4Fe-4S] cluster is required as a cofactor.

The protein localises to the cytoplasm. The enzyme catalyses N(6)-dimethylallyladenosine(37) in tRNA + (sulfur carrier)-SH + AH2 + 2 S-adenosyl-L-methionine = 2-methylsulfanyl-N(6)-dimethylallyladenosine(37) in tRNA + (sulfur carrier)-H + 5'-deoxyadenosine + L-methionine + A + S-adenosyl-L-homocysteine + 2 H(+). In terms of biological role, catalyzes the methylthiolation of N6-(dimethylallyl)adenosine (i(6)A), leading to the formation of 2-methylthio-N6-(dimethylallyl)adenosine (ms(2)i(6)A) at position 37 in tRNAs that read codons beginning with uridine. The protein is tRNA-2-methylthio-N(6)-dimethylallyladenosine synthase of Orientia tsutsugamushi (strain Boryong) (Rickettsia tsutsugamushi).